A 467-amino-acid chain; its full sequence is Acyl-lipid (8-3)-desaturase B (467 aa).

The Cytochrome b5 heme-binding domain maps to 12–89 (LKLYTWDEVS…IKQYEIGYIS (78 aa)). H47 and H70 together coordinate heme. 2 helical membrane passes run 123-143 (VSVGVFTRMVLIYLFLFVTYY) and 152-172 (FWLNCIFAVLYGVANSLFGLH). Positions 175–179 (HDACH) match the Histidine box-1 motif. A helical transmembrane segment spans residues 187-207 (MTWKILGATFDLFAGASFYAW). Positions 211–216 (HVIGHH) match the Histidine box-2 motif. The next 2 membrane-spanning stretches (helical) occupy residues 293–313 (AIFILGKLVFIISRFILPLIY) and 317–337 (FSHLICFFLISELVLGWYLAI). The Histidine box-3 signature appears at 400–404 (QVIHH).

The protein belongs to the fatty acid desaturase type 1 family. It depends on Fe(2+) as a cofactor.

Its subcellular location is the membrane. It carries out the reaction an (8Z,11Z,14Z)-icosatrienoyl-containing glycerolipid + 2 Fe(II)-[cytochrome b5] + O2 + 2 H(+) = (5Z,8Z,11Z,14Z)-eicosatetraenoyl-containing glycerolipid + 2 Fe(III)-[cytochrome b5] + 2 H2O. It catalyses the reaction an (8Z,11Z,14Z,17Z)-eicosatetraenoyl-containing glycerolipid + 2 Fe(II)-[cytochrome b5] + O2 + 2 H(+) = a (5Z,8Z,11Z,14Z,17Z)-eicosapentaenoyl-containing glycerolipid + 2 Fe(III)-[cytochrome b5] + 2 H2O. In terms of biological role, fatty acid desaturase that introduces a cis double bond at the 5-position in 18-carbon polyunsaturated fatty acids. The protein is Acyl-lipid (8-3)-desaturase B (fadB) of Dictyostelium discoideum (Social amoeba).